The sequence spans 355 residues: 3-isopropylmalate dehydrogenase (355 aa).

Positions 90, 100, 128, and 222 each coordinate substrate. Mg(2+)-binding residues include Asp-222, Asp-246, and Asp-250. 280–292 (GSAPDIAGKGVAN) provides a ligand contact to NAD(+).

Belongs to the isocitrate and isopropylmalate dehydrogenases family. LeuB type 1 subfamily. As to quaternary structure, homodimer. Requires Mg(2+) as cofactor. Mn(2+) serves as cofactor.

The protein localises to the cytoplasm. It carries out the reaction (2R,3S)-3-isopropylmalate + NAD(+) = 4-methyl-2-oxopentanoate + CO2 + NADH. It functions in the pathway amino-acid biosynthesis; L-leucine biosynthesis; L-leucine from 3-methyl-2-oxobutanoate: step 3/4. Functionally, catalyzes the oxidation of 3-carboxy-2-hydroxy-4-methylpentanoate (3-isopropylmalate) to 3-carboxy-4-methyl-2-oxopentanoate. The product decarboxylates to 4-methyl-2 oxopentanoate. The sequence is that of 3-isopropylmalate dehydrogenase from Cupriavidus pinatubonensis (strain JMP 134 / LMG 1197) (Cupriavidus necator (strain JMP 134)).